Reading from the N-terminus, the 639-residue chain is Uridine permease (639 aa).

The tract at residues 1 to 37 is disordered; that stretch reads MPVSDSGFDNSSKTMKDDTIPTEDYEEITKESEMGDA. Residues 1 to 162 lie on the Cytoplasmic side of the membrane; that stretch reads MPVSDSGFDN…LQLGLNWWQT (162 aa). Thr54 bears the Phosphothreonine mark. Ser56 is modified (phosphoserine). Residues 163 to 180 form a helical membrane-spanning segment; it reads WICIWVGYTFVAFFLILG. Topologically, residues 181 to 200 are extracellular; that stretch reads SKVGNNYHISFPISSRVSFG. A helical transmembrane segment spans residues 201–225; it reads IYFSIWIVINRVVMACVWNSTLAYI. At 226 to 259 the chain is on the cytoplasmic side; it reads GSQCVQLMLKAIFGTNLNTRIKDTIKNPNLTNFE. The helical transmembrane segment at 260 to 276 threads the bilayer; it reads FMCFMVFWVACLPFLWF. Over 277–283 the chain is Extracellular; it reads PPDKLRH. Residues 284-305 form a helical membrane-spanning segment; that stretch reads IFALKSAITPFAAFGFLIWTLC. At 306–367 the chain is on the cytoplasmic side; sequence KAKGHLALGS…KTYKSSVYSQ (62 aa). Residues 368–392 traverse the membrane as a helical segment; sequence LIALPVCYAIISLIGILSVSAAYTL. The Extracellular segment spans residues 393 to 416; the sequence is YGVNYWSPLDILNRYLDNYTSGNR. A helical transmembrane segment spans residues 417–435; it reads AGVFLISFIFAFDQLGANL. Residues 436 to 460 lie on the Cytoplasmic side of the membrane; the sequence is SGNSIPAGTDLTALLPKFINIRRGS. Residues 461–477 form a helical membrane-spanning segment; sequence YICALISLAICPWDLLS. Over 478–483 the chain is Extracellular; it reads SSSKFT. The chain crosses the membrane as a helical span at residues 484-507; the sequence is TALAAYAVFLSAIAGVISADYFIV. At 508–537 the chain is on the cytoplasmic side; that stretch reads RKGYVNIFHCYTDKPGSYYMYNKYGTNWRA. The helical transmembrane segment at 538–562 threads the bilayer; it reads VVAYIFGIAPNFAGFLGSVGVSVPI. Residues 563-572 are Extracellular-facing; that stretch reads GAMKVYYLNY. A helical membrane pass occupies residues 573–590; the sequence is FVGYLLAALSYCILVYFY. Over 591 to 639 the chain is Cytoplasmic; that stretch reads PIKGIPGDAKITDRKWLEEWVEVEEFGTEREAFEEYGGVSTGYEKIRYI. A Glycyl lysine isopeptide (Lys-Gly) (interchain with G-Cter in ubiquitin) cross-link involves residue Lys635.

The protein belongs to the purine-cytosine permease (2.A.39) family.

The protein resides in the membrane. Its function is as follows. High-affinity transport of uridine. This Saccharomyces cerevisiae (strain ATCC 204508 / S288c) (Baker's yeast) protein is Uridine permease (FUI1).